The primary structure comprises 224 residues: Zinc finger protein 22 (224 aa).

Positions Met-1–Gly-34 are disordered. 2 positions are modified to N6-acetyllysine: Lys-18 and Lys-23. Ser-49 bears the Phosphoserine mark. 5 consecutive C2H2-type zinc fingers follow at residues Tyr-55–His-77, His-83–His-105, Tyr-111–His-133, Tyr-139–His-161, and Tyr-167–His-189.

This sequence belongs to the krueppel C2H2-type zinc-finger protein family. As to expression, in the embryo, expressed in developing craniofacial structures including dental epithelium of maxillary molar tooth organs, tongue epithelium and muscle, and craniofacial bone osteoblasts. In the adult, expressed in mesoderm-derived tissues such as skeletal muscle, heart, kidney and liver. Intermediate expression in spleen, thymus and brain. Low levels in endoderm-derived tissues such as intestine and colon.

The protein localises to the nucleus. In terms of biological role, binds DNA through the consensus sequence 5'-CAATG-3'. May be involved in transcriptional regulation and may play a role in tooth formation. The chain is Zinc finger protein 22 (ZNF22) from Homo sapiens (Human).